Reading from the N-terminus, the 372-residue chain is Chaperone protein DnaJ (372 aa).

A J domain is found at 5–70 (SYYDILGVSK…KKRQAYDQFG (66 aa)). A CR-type zinc finger spans residues 140-218 (GREYKIEIPR…CGGQGLQEKR (79 aa)). Zn(2+) contacts are provided by Cys-153, Cys-156, Cys-170, Cys-173, Cys-192, Cys-195, Cys-206, and Cys-209. CXXCXGXG motif repeat units follow at residues 153-160 (CVDCNGSG), 170-177 (CPDCGGSG), 192-199 (CPTCRGKG), and 206-213 (CRSCGGQG).

It belongs to the DnaJ family. Homodimer. Zn(2+) is required as a cofactor.

It is found in the cytoplasm. Functionally, participates actively in the response to hyperosmotic and heat shock by preventing the aggregation of stress-denatured proteins and by disaggregating proteins, also in an autonomous, DnaK-independent fashion. Unfolded proteins bind initially to DnaJ; upon interaction with the DnaJ-bound protein, DnaK hydrolyzes its bound ATP, resulting in the formation of a stable complex. GrpE releases ADP from DnaK; ATP binding to DnaK triggers the release of the substrate protein, thus completing the reaction cycle. Several rounds of ATP-dependent interactions between DnaJ, DnaK and GrpE are required for fully efficient folding. Also involved, together with DnaK and GrpE, in the DNA replication of plasmids through activation of initiation proteins. In Leptospira interrogans serogroup Icterohaemorrhagiae serovar copenhageni (strain Fiocruz L1-130), this protein is Chaperone protein DnaJ.